Here is a 327-residue protein sequence, read N- to C-terminus: Thioredoxin reductase sirT (327 aa).

FAD-binding positions include 15–18, 37–42, His-50, and Ala-115; these read AGPA and DTGVFR. Residues Cys-139 and Cys-142 are joined by a disulfide bond. FAD is bound by residues Asp-289 and 296-297; that span reads QV.

This sequence belongs to the class-II pyridine nucleotide-disulfide oxidoreductase family. In terms of assembly, homodimer. It depends on FAD as a cofactor.

It participates in mycotoxin biosynthesis. Thioredoxin reductase; part of the gene cluster that mediates the biosynthesis of sirodesmin PL, an epipolythiodioxopiperazine (ETP) characterized by a disulfide bridged cyclic dipeptide and that acts as a phytotoxin which is involved in the blackleg didease of canola. SirD catalyzes the O-prenylation of L-tyrosine (L-Tyr) in the presence of dimethylallyl diphosphate (DMAPP) to yield 4-O-dimethylallyl-L-Tyr, and therefore represents probably the first pathway-specific enzyme in the biosynthesis of sirodesmin PL. 4-O-dimethylallyl-L-Tyr, then undergoes condensation with L-Ser in a reaction catalyzed by the non-ribosomal peptide synthase sirP to form the diketopiperazine (DKP) backbone. Further bishydroxylation of the DKP performed by the cytochrome P450 monooxygenase sirC leads to the production of the intermediate phomamide. This step is essential to form the reactive thiol group required for toxicity of sirodesmin PL. The next steps of sirodesmin biosynthesis are not well understood yet, but some predictions could be made from intermediate compounds identification. Phomamide is converted into phomalizarine via oxidation, probably by sirT. Further oxidation, methylation (by sirM or sirN) and reduction steps convert phomalizarine to deacetyl sirodesmin. Finally, acetyltransferase sirH probably acetylates deacetyl sirodesmin to produce sirodesmin PL. In Leptosphaeria maculans (Blackleg fungus), this protein is Thioredoxin reductase sirT.